A 530-amino-acid polypeptide reads, in one-letter code: MEPRAVAEAVETGKEDVIMEALRSYNQEHSQSFTFDDAQQEDRKRLAELLVSVLEQGLPPSHRVTWLQSVRILSRDRNCLDPFTSRQSLQALACYADISGSEGSVPDSPDMDVVLESLKCLCNLVLSSPVAQMLAAEARLVVKLTERVGLYRERSFPHDVQFFDLRLLFLLTALRTDVRQQLFQELKGVHLLTDTLELTLAVTPEGNPPKLLPSQETERAMEILKVLFNITLDSIKGEVDEEDAALYRHLGTLLRHCVMIATAGDRTEEFHGHAVNLLGNLPLKCLDVLLTLEPHEDSVEFMGVNMDVIRALLIFLEKRLHQTHRLKESVAPVLSVLTECARMHRPARKFLKAQVLPPLRDVRTRPEVGEMLRNKLVRLMTHLDTDVKRVAAEFLFVLCSESVPRFIKYTGYGNAAGLLAARGLMAGGRPEGQYSEDEDTDTDEYKEAKASINPVTGRVEEKPPNPMEGMTEEQKEHEAMKLVTMFDKLSRNRVIQPMGMSPRGHLTSLQDAMCETMEQQLSSDPDSDPD.

At S435 the chain carries Phosphoserine. Phosphothreonine is present on residues T440 and T442. A phosphoserine mark is found at S501, S522, S523, and S527.

This sequence belongs to the synembryn family. As to quaternary structure, interacts with GDP-bound G alpha proteins GNAI1, GNAO1 and GNAQ, and with GNA13 with lower affinity. Does not interact with G-alpha proteins when they are in complex with subunits beta and gamma. Interacts (via C-terminus) with RGS14; the interaction stimulates the dissociation of the complex between RGS14 and the active GTP-bound form of GNAI1. Interacts with NCS1; interaction is favored in the absence of Ca(2+) and myristoylation of NCS1 is not required. Phosphorylated at Ser-435 and Thr-440 by CK2, stabilizing its interface with G alpha proteins.

The protein resides in the cytoplasm. It localises to the cell cortex. Functionally, chaperone that specifically binds and folds nascent G alpha proteins prior to G protein heterotrimer formation, promoting their stability and activity: folds GNAI1, GNAO1, GNA13 and GNAQ. Does not fold G(s) G-alpha proteins GNAS nor GNAL. Also acts as a guanine nucleotide exchange factor (GEF) for G alpha proteins by stimulating exchange of bound GDP for free GTP. Involved in regulation of microtubule pulling forces during mitotic movement of chromosomes by stimulating G(i)-alpha protein (GNAI1), possibly leading to release G(i)-alpha-GTP and NuMA proteins from the NuMA-GPSM2-G(i)-alpha-GDP complex. Also acts as an activator for G(q)-alpha (GNAQ) protein by enhancing the G(q)-coupled receptor-mediated ERK activation. This chain is Chaperone Ric-8A (RIC8A), found in Macaca fascicularis (Crab-eating macaque).